We begin with the raw amino-acid sequence, 45 residues long: Rubredoxin-1 (45 aa).

At M1 the chain carries N-formylmethionine. Residues 1-45 (MQKYVCNVCGYEYDPAEHDNVPFDQLPDDWCCPVCGVSKDQFSPA) form the Rubredoxin-like domain. Fe cation contacts are provided by C6, C9, C32, and C35.

This sequence belongs to the rubredoxin family. It depends on Fe(3+) as a cofactor.

The protein localises to the cytoplasm. In terms of biological role, rubredoxin is a small nonheme, iron protein lacking acid-labile sulfide. Its single Fe, chelated to 4 Cys, functions as an electron acceptor and may also stabilize the conformation of the molecule. Its function is as follows. Electron acceptor for cytoplasmic lactate dehydrogenase. The chain is Rubredoxin-1 (rd1) from Desulfovibrio desulfuricans (strain ATCC 27774 / DSM 6949 / MB).